A 271-amino-acid polypeptide reads, in one-letter code: tRNA pseudouridine synthase A (271 aa).

Asp52 functions as the Nucleophile in the catalytic mechanism. Tyr110 is a binding site for substrate.

Belongs to the tRNA pseudouridine synthase TruA family. Homodimer.

The catalysed reaction is uridine(38/39/40) in tRNA = pseudouridine(38/39/40) in tRNA. In terms of biological role, formation of pseudouridine at positions 38, 39 and 40 in the anticodon stem and loop of transfer RNAs. This is tRNA pseudouridine synthase A from Burkholderia mallei (strain NCTC 10247).